The primary structure comprises 152 residues: SsrA-binding protein (152 aa).

The protein belongs to the SmpB family.

It is found in the cytoplasm. Its function is as follows. Required for rescue of stalled ribosomes mediated by trans-translation. Binds to transfer-messenger RNA (tmRNA), required for stable association of tmRNA with ribosomes. tmRNA and SmpB together mimic tRNA shape, replacing the anticodon stem-loop with SmpB. tmRNA is encoded by the ssrA gene; the 2 termini fold to resemble tRNA(Ala) and it encodes a 'tag peptide', a short internal open reading frame. During trans-translation Ala-aminoacylated tmRNA acts like a tRNA, entering the A-site of stalled ribosomes, displacing the stalled mRNA. The ribosome then switches to translate the ORF on the tmRNA; the nascent peptide is terminated with the 'tag peptide' encoded by the tmRNA and targeted for degradation. The ribosome is freed to recommence translation, which seems to be the essential function of trans-translation. The polypeptide is SsrA-binding protein (Rickettsia bellii (strain RML369-C)).